A 3088-amino-acid chain; its full sequence is MEEFLQRAKSKLNRSKRLEKVHVVIGPKSCDLDSLISTFTYAYFLDKVSPPGVLCLPVLNIPRTEFNYFTETRFILEELNISESFHIFRDEINLHQLNDEGKLSITLVGSSVLASEDKTLESAVVKVINPVEQSDANVEFRESSSSLVLKEILQEAPELITEQLAHRLRGSILFKWMTMESEKISEKQEEILSILEEKFPNLPPREDIINVLQETQFSAQGLSIEQTMLKDLKELSDGEIKVAISTVSMNLENCLFHSNITSDLKAFTDKFGFDVLILFSSYLSEEQQPRRQIAVYSENMELCSQICCELEECQNPCLELEPFDCGCDEILVYQQEDPSVTCDQVVLVVKEVINRRCPEMVSNSRTSSTEAVAGSAPLSQGSSGIMELYGSDIEPQPSSVNFIENPPDLNDSNQAQVDANVDLVSPDSGLATIRSSRSSKESSVFLSDDSPVGEGAGPHHTLLPGLDSYSPIPEGAVAEEHAWSGEHGEHFDLFNFDPAPMASGQSQQSSHSADYSPADDFFPNSDLSEGQLPAGPEGLDGMGTNMSNYSSSSLLSGAGKDSLVEHDEEFVQRQDSPRDNSERNLSLTDFVGDESPSPERLKNTGKRIPPTPMNSLVESSPSTEEPASLYTEDMTQKATDTGHMGPPQTHARCSSWWGGLEIDSKNIADAWSSSEQESVFQSPESWKEHKPSSIDRRASDSVFQPKSLEFTKSGPWESEFGQPELGSNDIQDKNEESLPFQNLPMEKSPLPNTSPQGTNHLIEDFASLWHSGRSPTAMPEPWGNPTDDGEPAAVAPFPAWSAFGKEDHDEALKNTWNLHPTSSKTPSVRDPNEWAMAKSGFAFSSSELLDNSPSEINNEAAPEIWGKKNNDSRDHIFAPGNPSSDLDHTWTNSKPPKEDQNGLVDPKTRGKVYEKVDSWNLFEENMKKGGSDVLVPWEDSFLSYKCSDYSASNLGEDSVPSPLDTNYSTSDSYTSPTFAGDEKETEHKPFAKEEGFESKDGNSTAEETDIPPQSLQQSSRNRISSGPGNLDMWASPHTDNSSEINTTHNLDENELKTEHTDGKNISMEDDVGESSQSSYDDPSMMQLYNETNRQLTLLHSSTNSRQTAPDSLDLWNRVILEDTQSTATISDMDNDLDWDDCSGGAAIPSDGQTEGYMAEGSEPETRFTVRQLEPWGLEYQEANQVDWELPASDEHTKDSAPSEHHTLNEKSGQLIANSIWDSVMRDKDMSSFMLPGSSHITDSEQRELPPEIPSHSANVKDTHSPDAPAASGTSESEALISHLDKQDTERETLQSDAASLATRLENPGYFPHPDPWKGHGDGQSESEKEAQGATDRGHLDEEEVIASGVENASGISEKGQSDQELSSLVASEHQEICIKSGKISSLAVTFSPQTEEPEEVLEYEEGSYNLDSRDVQTGMSADNLQPKDTHEKHLMSQRNSGETTETSDGMNFTKYVSVPEKDLEKTEECNFLEPENVGGGPPHRVPRSLDFGDVPIDSDVHVSSTCSEITKNLDVKGSENSLPGAGSSGNFDRDTISSEYTHSSASSPELNDSSVALSSWGQQPSSGYQEENQGNWSEQNHQESELITTDGQVEIVTKVKDLEKNRINEFEKSFDRKTPTFLEIWNDSVDGDSFSSLSSPETGKYSEHSGTHQESNLIASYQEKNEHDISATVQPEDARVISTSSGSDDDSVGGEESIEEEIQVANCHVAEDESRAWDSLNESNKFLVTADPKSENIYDYLDSSEPAENENKSNPFCDNQQSSPDPWTFSPLTETEMQITAVEKEKRSSPETGTTGDVAWQISPKASFPKNEDNSQLEMLGFSADSTEWWKASPQEGRLIESPFERELSDSSGVLEINSSVHQNASPWGVPVQGDIEPVETHYTNPFSDNHQSPFLEGNGKNSHEQLWNIQPRQPDPDADKFSQLVKLDQIKEKDSREQTFVSAAGDELTPETPTQEQCQDTMLPVCDHPDTAFTHAEENSCVTSNVSTNEGQETNQWEQEKSYLGEMTNSSIATENFPAVSSPTQLIMKPGSEWDGSTPSEDSRGTFVPDILHGNFQEGGQLASAAPDLWIDAKKPFSLKADGENPDILTHCEHDSNSQASDSPDICHDSEAKQETEKHLSACMGPEVESSELCLTEPEIDEEPIYEPGREFVPSNAELDSENATVLPPIGYQADIKGSSQPASHKGSPEPSEINGDNSTGLQVSEKGASPDMAPILEPVDRRIPRIENVATSIFVTHQEPTPEGDGSWISDSFSPESQPGARALFDGDPHLSTENPALVPDALLASDTCLDISEAAFDHSFSDASGLNTSTGTIDDMSKLTLSEGHPETPVDGDLGKQDICSSEASWGDFEYDVMGQNIDEDLLREPEHFLYGGDPPLEEDSLKQSLAPYTPPFDLSYLTEPAQSAETIEEAGSPEDESLGCRAAEIVLSALPDRRSEGNQAETKNRLPGSQLAVLHIREDPESVYLPVGAGSNILSPSNVDWEVETDNSDLPAGGDIGPPNGASKEISELEEEKTIPTKEPEQIKSEYKEERCTEKNEDRHALHMDYILVNREENSHSKPETCEERESIAELELYVGSKETGLQGTQLASFPDTCQPASLNERKGLSAEKMSSKSDTRSSFESPAQDQSWMFLGHSEVGDPSLDARDSGPGWSGKTVEPFSELGLGEGPQLQILEEMKPLESLALEEASGPVSQSQKSKSRGRAGPDAVTLQAVTHDNEWEMLSPQPVQKNMIPDTEMEEETEFLELGTRISRPNGLLSEDVGMDIPFEEGVLSPSAADMRPEPPNSLDLNDTHPRRIKLTAPNINLSLDQSEGSILSDDNLDSPDEIDINVDELDTPDEADSFEYTGHDPTANKDSGQESESIPEYTAEEEREDNRLWRTVVIGEQEQRIDMKVIEPYRRVISHGGYYGDGLNAIIVFAACFLPDSSRADYHYVMENLFLYVISTLELMVAEDYMIVYLNGATPRRRMPGLGWMKKCYQMIDRRLRKNLKSFIIVHPSWFIRTILAVTRPFISSKFSSKIKYVNSLSELSGLIPMDCIHIPESIIKLDEELREASEAAKTSCLYNDPEMSSMEKDIDLKLKEKP.

At Met1 the chain carries N-acetylmethionine. Positions 109–111 (GSS) match the DHH motif motif. 22 disordered regions span residues 433–468 (IRSSRSSKESSVFLSDDSPVGEGAGPHHTLLPGLDS), 490–628 (HFDL…EPAS), 673–759 (SSEQ…QGTN), 771–795 (SGRSPTAMPEPWGNPTDDGEPAAVA), 846–909 (SELL…PKTR), 952–1080 (SNLG…SSYD), 1192–1211 (SDEHTKDSAPSEHHTLNEKS), 1231–1371 (SFML…LVAS), 1413–1452 (RDVQTGMSADNLQPKDTHEKHLMSQRNSGETTETSDGMNF), 1472–1491 (LEPENVGGGPPHRVPRSLDF), 1515–1585 (VKGS…QESE), 1632–1698 (DSFS…EESI), 1741–1768 (LDSSEPAENENKSNPFCDNQQSSPDPWT), 1782–1813 (VEKEKRSSPETGTTGDVAWQISPKASFPKNED), 2089–2114 (ILTHCEHDSNSQASDSPDICHDSEAK), 2173–2215 (YQAD…PDMA), 2240–2260 (QEPTPEGDGSWISDSFSPESQ), 2492–2542 (SDLP…KNED), 2589–2667 (TQLA…SELG), 2687–2710 (ALEEASGPVSQSQKSKSRGRAGPD), 2814–2833 (QSEGSILSDDNLDSPDEIDI), and 2841–2875 (PDEADSFEYTGHDPTANKDSGQESESIPEYTAEEE). The span at 503–512 (SGQSQQSSHS) shows a compositional bias: low complexity. Basic and acidic residues predominate over residues 562–582 (SLVEHDEEFVQRQDSPRDNSE). Composition is skewed to polar residues over residues 613–625 (MNSLVESSPSTEE) and 673–684 (SSEQESVFQSPE). A compositionally biased stretch (basic and acidic residues) spans 685-699 (SWKEHKPSSIDRRAS). Over residues 750 to 759 (LPNTSPQGTN) the composition is skewed to polar residues. Over residues 846-857 (SELLDNSPSEIN) the composition is skewed to polar residues. Over residues 865–876 (WGKKNNDSRDHI) the composition is skewed to basic and acidic residues. Positions 881-894 (NPSSDLDHTWTNSK) are enriched in polar residues. Basic and acidic residues predominate over residues 895-909 (PPKEDQNGLVDPKTR). The span at 964–977 (DTNYSTSDSYTSPT) shows a compositional bias: low complexity. The span at 980 to 1000 (GDEKETEHKPFAKEEGFESKD) shows a compositional bias: basic and acidic residues. Composition is skewed to polar residues over residues 1001-1027 (GNSTAEETDIPPQSLQQSSRNRISSGP) and 1037-1048 (HTDNSSEINTTH). Composition is skewed to basic and acidic residues over residues 1049-1062 (NLDENELKTEHTDG), 1192-1208 (SDEHTKDSAPSEHHTLN), 1282-1293 (HLDKQDTERETL), 1314-1339 (DPWKGHGDGQSESEKEAQGATDRGHL), and 1425-1434 (QPKDTHEKHL). Residues 1436–1450 (SQRNSGETTETSDGM) are compositionally biased toward polar residues. The segment covering 1537 to 1585 (SSEYTHSSASSPELNDSSVALSSWGQQPSSGYQEENQGNWSEQNHQESE) has biased composition (polar residues). Acidic residues predominate over residues 1687 to 1698 (SDDDSVGGEESI). Positions 1752–1768 (KSNPFCDNQQSSPDPWT) are enriched in polar residues. Composition is skewed to basic and acidic residues over residues 2516–2542 (EKTIPTKEPEQIKSEYKEERCTEKNED) and 2604–2622 (NERKGLSAEKMSSKSDTRS). The span at 2623 to 2632 (SFESPAQDQS) shows a compositional bias: polar residues. The span at 2823–2833 (DNLDSPDEIDI) shows a compositional bias: acidic residues. A CRAL-TRIO domain is found at 2895-3056 (DMKVIEPYRR…SIIKLDEELR (162 aa)).

Belongs to the PPase class C family. Prune subfamily. In terms of tissue distribution, a high level of expression seen in the nervous system (brain, cerebellum and spinal cord) as well as adrenal gland. Expressed at high levels in noneuroblastoma, rhabdomyosarcoma, melanoma and some osteosarcoma cell lines, whereas at only low levels in cancer cell lines of liver, breast, thyroid and colon. Expression is significantly higher in favorable tumors than aggressive ones.

Its subcellular location is the cytoplasm. Functionally, may play an important role in regulating differentiation, survival and aggressiveness of the tumor cells. The chain is Protein prune homolog 2 (PRUNE2) from Homo sapiens (Human).